The chain runs to 325 residues: MIKLLYPEFWQKRNIIAYLLLPISLIYQFLGYLRASLARPIMLPAKVICVGNCSVGGTGKTQIVMYLAKLLRAKNVSFVIVTKAYGSNLKSATTIHQGHTALEVGDEGVILAKYGTVIATKNIKEILPLINELKPDIIIIDDFLQNPYFHKDFTIVSVDSQRLFGNGFLIPAGPLRQYPNKALDTADLIFLVSSTNDKIPNILTPYIDKLINAQIIPSSDVDKTKNYFAFSGIGNPERFFSTLKNYGLNITGYKIFPDHYNYLQADLENLYSLAKEHNATLITTRKDHIKFNDLNNNIVCLDVELSINNPDLLNEKIFKKAQIFN.

54–61 (SVGGTGKT) serves as a coordination point for ATP.

It belongs to the LpxK family.

The enzyme catalyses a lipid A disaccharide + ATP = a lipid IVA + ADP + H(+). Its pathway is glycolipid biosynthesis; lipid IV(A) biosynthesis; lipid IV(A) from (3R)-3-hydroxytetradecanoyl-[acyl-carrier-protein] and UDP-N-acetyl-alpha-D-glucosamine: step 6/6. Functionally, transfers the gamma-phosphate of ATP to the 4'-position of a tetraacyldisaccharide 1-phosphate intermediate (termed DS-1-P) to form tetraacyldisaccharide 1,4'-bis-phosphate (lipid IVA). This Rickettsia felis (strain ATCC VR-1525 / URRWXCal2) (Rickettsia azadi) protein is Tetraacyldisaccharide 4'-kinase.